The chain runs to 503 residues: Aromatase (503 aa).

A run of 2 helical transmembrane segments spans residues 19-39 (EAMPAATMPVLLLTGLFLLVW) and 303-323 (MLIAAPDTMSVSLFFMLFLIA). Asp309 and Met374 together coordinate substrate. Cys437 provides a ligand contact to heme.

The protein belongs to the cytochrome P450 family. Heme is required as a cofactor. Phosphorylated in vitro by PKA and PKG/PRKG1. These phosphorylations inhibit the catalytic activity as measured by estrone synthesis from androstenedione (36% decrease for PKA and 30% for PKG/PRKG1). As to expression, widely expressed, including in adult and fetal brain, placenta, skin fibroblasts, adipose tissue and gonads.

The protein localises to the endoplasmic reticulum membrane. It localises to the microsome membrane. It carries out the reaction testosterone + 3 reduced [NADPH--hemoprotein reductase] + 3 O2 = 17beta-estradiol + formate + 3 oxidized [NADPH--hemoprotein reductase] + 4 H2O + 4 H(+). It catalyses the reaction androst-4-ene-3,17-dione + 3 reduced [NADPH--hemoprotein reductase] + 3 O2 = estrone + formate + 3 oxidized [NADPH--hemoprotein reductase] + 4 H2O + 4 H(+). The catalysed reaction is androst-4-ene-3,17-dione + reduced [NADPH--hemoprotein reductase] + O2 = 19-hydroxyandrost-4-ene-3,17-dione + oxidized [NADPH--hemoprotein reductase] + H2O + H(+). The enzyme catalyses 19-hydroxyandrost-4-ene-3,17-dione + reduced [NADPH--hemoprotein reductase] + O2 = 19-oxo-androst-4-ene-3,17-dione + oxidized [NADPH--hemoprotein reductase] + 2 H2O + H(+). It carries out the reaction 19-oxo-androst-4-ene-3,17-dione + reduced [NADPH--hemoprotein reductase] + O2 = estrone + formate + oxidized [NADPH--hemoprotein reductase] + H2O + 2 H(+). It catalyses the reaction estrone + reduced [NADPH--hemoprotein reductase] + O2 = 2-hydroxyestrone + oxidized [NADPH--hemoprotein reductase] + H2O + H(+). The catalysed reaction is 17beta-hydroxy-5alpha-androstan-3-one + reduced [NADPH--hemoprotein reductase] + O2 = 17beta,19-dihydroxy-3-oxo-5alpha-androstanone + oxidized [NADPH--hemoprotein reductase] + H2O + H(+). The enzyme catalyses 17beta,19-dihydroxy-3-oxo-5alpha-androstanone + reduced [NADPH--hemoprotein reductase] + O2 = 17beta-hydroxy-3,19-dioxo-5alpha-androstanone + oxidized [NADPH--hemoprotein reductase] + 2 H2O + H(+). It carries out the reaction 17beta-hydroxy-3,19-dioxo-5alpha-androstanone + reduced [NADPH--hemoprotein reductase] + O2 = 17beta-hydroxy-3-oxo-19-nor-5alpha-androst-1-ene + formate + oxidized [NADPH--hemoprotein reductase] + H2O + 2 H(+). Its pathway is steroid hormone biosynthesis. A cytochrome P450 monooxygenase that catalyzes the conversion of C19 androgens, androst-4-ene-3,17-dione (androstenedione) and testosterone to the C18 estrogens, estrone and estradiol, respectively. Catalyzes three successive oxidations of C19 androgens: two conventional oxidations at C19 yielding 19-hydroxy and 19-oxo/19-aldehyde derivatives, followed by a third oxidative aromatization step that involves C1-beta hydrogen abstraction combined with cleavage of the C10-C19 bond to yield a phenolic A ring and formic acid. Alternatively, the third oxidative reaction yields a 19-norsteroid and formic acid. Converts dihydrotestosterone to delta1,10-dehydro 19-nordihydrotestosterone and may play a role in homeostasis of this potent androgen. Also displays 2-hydroxylase activity toward estrone. Mechanistically, uses molecular oxygen inserting one oxygen atom into a substrate, and reducing the second into a water molecule, with two electrons provided by NADPH via cytochrome P450 reductase (CPR; NADPH-ferrihemoprotein reductase). In Homo sapiens (Human), this protein is Aromatase.